We begin with the raw amino-acid sequence, 477 residues long: MANMQGLVERLERAVSRLESLSAESHRPPGNCGEVNGVIAGVAPSVEAFDKLMDSMVAEFLKNSRILAGDVETHAEMVHSAFQAQRAFLLMASQYQQPHENDVAALLKPISEKIQEIQTFRERNRGSNMFNHLSAVSESIPALGWIAVSPKPGPYVKEMNDAATFYTNRVLKDYKHSDLRHVDWVKSYLNIWSELQAYIKEHHTTGLTWSKTGPVASTVSAFSVLSSGPGLPPPPPPLPPPGPPPLFENEGKKEESSPSRSALFAQLNQGEAITKGLRHVTDDQKTYKNPSLRAQGGQTQSPTKSHTPSPTSPKSYPSQKHAPVLELEGKKWRVEYQEDRNDLVISETELKQVAYIFKCEKSTIQIKGKVNSIIIDNCKKLGLVFDNVVGIVEVINSQDIQIQVMGRVPTISINKTEGCHIYLSEDALDCEIVSAKSSEMNILIPQDGDYREFPIPEQFKTAWDGSKLITEPAEIMA.

Ala-2 carries the N-acetylalanine modification. Disordered regions lie at residues 225–261 (LSSG…PSRS) and 274–321 (TKGL…SQKH). A compositionally biased stretch (pro residues) spans 230–246 (GLPPPPPPLPPPGPPPL). Positions 298 to 320 (QTQSPTKSHTPSPTSPKSYPSQK) are enriched in low complexity. Phosphoserine occurs at positions 301 and 309. The C-CAP/cofactor C-like domain occupies 317–455 (PSQKHAPVLE…QDGDYREFPI (139 aa)).

This sequence belongs to the CAP family.

The protein localises to the cell membrane. Involved in the regulation of actin polymerization. The protein is Adenylyl cyclase-associated protein 2 (CAP2) of Homo sapiens (Human).